The chain runs to 546 residues: Tryptophan biosynthesis protein TrpCD (546 aa).

The indole-3-glycerol phosphate synthase stretch occupies residues 1–226 (MMDFGFVDSL…FVQTVCGGEK (226 aa)). The segment at 227-546 (MIEDVLRGLD…EEIACKSTSM (320 aa)) is anthranilate phosphoribosyltransferase. 5-phospho-alpha-D-ribose 1-diphosphate-binding positions include Gly295, 298 to 299 (GD), Ser303, 305 to 308 (NVST), 322 to 330 (KHGNRAVSS), and Ser334. Anthranilate is bound at residue Gly295. Ser307 is a Mg(2+) binding site. Residue Asn325 coordinates anthranilate. An anthranilate-binding site is contributed by Arg380. Mg(2+) contacts are provided by Asp437 and Glu438.

The protein in the N-terminal section; belongs to the TrpC family. In the C-terminal section; belongs to the anthranilate phosphoribosyltransferase family. The cofactor is Mg(2+).

The enzyme catalyses 1-(2-carboxyphenylamino)-1-deoxy-D-ribulose 5-phosphate + H(+) = (1S,2R)-1-C-(indol-3-yl)glycerol 3-phosphate + CO2 + H2O. The catalysed reaction is N-(5-phospho-beta-D-ribosyl)anthranilate + diphosphate = 5-phospho-alpha-D-ribose 1-diphosphate + anthranilate. Its pathway is amino-acid biosynthesis; L-tryptophan biosynthesis; L-tryptophan from chorismate: step 2/5. It participates in amino-acid biosynthesis; L-tryptophan biosynthesis; L-tryptophan from chorismate: step 4/5. In terms of biological role, bifunctional enzyme that catalyzes the second and fourth steps of tryptophan biosynthetic pathway. The second step is catalyzed by the anthranilate phosphoribosyltransferase, coded by the TrpD domain and the fourth step is catalyzed by indole-3-glycerol phosphate synthase, coded by the TrpC domain. The protein is Tryptophan biosynthesis protein TrpCD (trpCD) of Archaeoglobus fulgidus (strain ATCC 49558 / DSM 4304 / JCM 9628 / NBRC 100126 / VC-16).